A 720-amino-acid chain; its full sequence is MAKRVADAQIQRETYDSNESDDDVTPSTKVASSAVMNRRKIAMPKRRMAFKPFGSAKSDETKQASSFSFLNRADGTGEAQVDNSPTTESNSRLKALNLQFKAKVDDLVLGKPLADLRPLFTRYELYIKNILEAPVKSIENPTQTKGNDAKPAKVEDVQKSSDSSSEDEVKVEGPKFTIDAKPPISDSVFSFGPKKENRKKDESDSENDIEIKGPEFKFSGTVSSDVFKLNPSTDKNEKKTETNAKPFSFSSATSTTEQTKSKNPLSLTEATKTNVDNNSKAEASFTFGTKHAADSQNNKPSFVFGQAAAKPSLEKSSFTFGSTTIEKKNDENSTSNSKPEKSSDSNDSNPSFSFSIPSKNTPDASKPSFSFGVPNSSKNETSKPVFSFGAATPSAKEASQEDDNNNVEKPSSKPAFNLISNAGTEKEKESKKDSKPAFSFGISNGSESKDSDKPSLPSAVDGENDKKEATKPAFSFGINTNTTKTADTKAPTFTFGSSALADNKEDVKKPFSFGTSQPNNTPSFSFGKTTANLPANSSTSPAPSIPSTGFKFSLPFEQKGSQTTTNDSKEESTTEATGNESQDATKVDATPEESKPINLQNGEEDEVALFSQKAKLMTFNAETKSYDSRGVGEMKLLKKKDDPSKVRLLCRSDGMGNVLLNATVVDSFKYEPLAPGNDNLIKAPTVAADGKLVTYIVKFKQKEEGRSFTKAIEDAKKEMK.

A disordered region spans residues 1-33 (MAKRVADAQIQRETYDSNESDDDVTPSTKVASS). Phosphoserine occurs at positions 17 and 20. Positions 35-50 (VMNRRKIAMPKRRMAF) are interaction with SRP1 NLS binding site 1. Disordered regions lie at residues 52 to 92 (PFGS…SNSR) and 136 to 278 (KSIE…VDNN). Residues 67–69 (FSF) form an FXF 1 repeat. Positions 81–92 (VDNSPTTESNSR) are enriched in polar residues. Ser137 is subject to Phosphoserine. A compositionally biased stretch (basic and acidic residues) spans 147–159 (NDAKPAKVEDVQK). Ser165 carries the phosphoserine modification. The FXFG 1 repeat unit spans residues 189–192 (FSFG). Basic and acidic residues predominate over residues 193–202 (PKKENRKKDE). 2 positions are modified to phosphoserine: Ser203 and Ser205. FXF repeat units follow at residues 216–218 (FKF) and 247–249 (FSF). Residues 243–278 (NAKPFSFSSATSTTEQTKSKNPLSLTEATKTNVDNN) are compositionally biased toward polar residues. FXFG repeat units lie at residues 285–288 (FTFG), 302–305 (FVFG), and 318–321 (FTFG). Residues 315-324 (KSSFTFGSTT) show a composition bias toward polar residues. Residues 315–604 (KSSFTFGSTT…KPINLQNGEE (290 aa)) are disordered. Low complexity predominate over residues 345 to 360 (SNDSNPSFSFSIPSKN). A phosphoserine mark is found at Ser348 and Ser351. An FXF 4 repeat occupies 352–354 (FSF). Phosphothreonine is present on Thr361. One copy of the FXFG 5 repeat lies at 369-372 (FSFG). The span at 373–384 (VPNSSKNETSKP) shows a compositional bias: polar residues. Residues 386-389 (FSFG) form an FXFG 6 repeat. Residues 424–435 (TEKEKESKKDSK) are compositionally biased toward basic and acidic residues. 5 FXFG repeats span residues 438–441 (FSFG), 474–477 (FSFG), 493–496 (FTFG), 511–514 (FSFG), and 524–527 (FSFG). The segment covering 479-495 (NTNTTKTADTKAPTFTF) has biased composition (low complexity). Positions 513–533 (FGTSQPNNTPSFSFGKTTANL) are enriched in polar residues. A compositionally biased stretch (low complexity) spans 534–548 (PANSSTSPAPSIPST). One copy of the FXF 5 repeat lies at 550–552 (FKF). A compositionally biased stretch (polar residues) spans 574 to 584 (TEATGNESQDA). Ser581 carries the post-translational modification Phosphoserine. A RanBD1 domain is found at 583–720 (DATKVDATPE…AIEDAKKEMK (138 aa)). A Phosphothreonine modification is found at Thr590.

As to quaternary structure, component of the nuclear pore complex (NPC). NPC constitutes the exclusive means of nucleocytoplasmic transport. NPCs allow the passive diffusion of ions and small molecules and the active, nuclear transport receptor-mediated bidirectional transport of macromolecules such as proteins, RNAs, ribonucleoparticles (RNPs), and ribosomal subunits across the nuclear envelope. Due to its 8-fold rotational symmetry, all subunits are present with 8 copies or multiples thereof. Binds to the nuclear basket of the NPC through NUP60 in a (GSP1, GSP2) GTPase-GTP-dependent manner. Interacts through its FG repeats with nuclear transport factors. Interacts with KAP122.

Its subcellular location is the nucleus. The protein resides in the nuclear pore complex. It is found in the nucleus membrane. Functionally, functions as a component of the nuclear pore complex (NPC). NPC components, collectively referred to as nucleoporins (NUPs), can play the role of both NPC structural components and of docking or interaction partners for transiently associated nuclear transport factors. Active directional transport is assured by both, a Phe-Gly (FG) repeat affinity gradient for these transport factors across the NPC and a transport cofactor concentration gradient across the nuclear envelope (GSP1 and GSP2 GTPases associated predominantly with GTP in the nucleus, with GDP in the cytoplasm). As one of the FG repeat nucleoporins NUP2 is involved in interactions with and guidance of nuclear transport receptors such as SRP1-KAP95 (importin alpha and beta) through the NPC. Like the closely related NUP1 it also plays an important role in disassembling and recycling SRP1-KAP95 to the cytoplasm after nuclear import. Upon entry of the heterotrimeric SRP1-KAP95-cargo complex in the nucleus, NUP2 binds through its N-terminus to the SRP1 nuclear localization signal (NLS) binding site, thus accelerating the release of the NLS-cargo. SRP1 in turn is released from NUP2 by binding of the GSP1-GTP associated export factor CSE1. NUP2 may also have a chromatin boundary/insulator activity through indirect interaction with genomic DNA via CSE1 and blocking of heterochromatin spreading. This chain is Nucleoporin NUP2 (NUP2), found in Saccharomyces cerevisiae (strain ATCC 204508 / S288c) (Baker's yeast).